Reading from the N-terminus, the 428-residue chain is Serine--tRNA ligase (428 aa).

235–237 (TAE) contacts L-serine. 266-268 (RSE) is a binding site for ATP. An L-serine-binding site is contributed by glutamate 289. 353 to 356 (EISS) is a binding site for ATP. Serine 389 is a binding site for L-serine.

Belongs to the class-II aminoacyl-tRNA synthetase family. Type-1 seryl-tRNA synthetase subfamily. In terms of assembly, homodimer. The tRNA molecule binds across the dimer.

The protein resides in the cytoplasm. The enzyme catalyses tRNA(Ser) + L-serine + ATP = L-seryl-tRNA(Ser) + AMP + diphosphate + H(+). It carries out the reaction tRNA(Sec) + L-serine + ATP = L-seryl-tRNA(Sec) + AMP + diphosphate + H(+). It participates in aminoacyl-tRNA biosynthesis; selenocysteinyl-tRNA(Sec) biosynthesis; L-seryl-tRNA(Sec) from L-serine and tRNA(Sec): step 1/1. In terms of biological role, catalyzes the attachment of serine to tRNA(Ser). Is also able to aminoacylate tRNA(Sec) with serine, to form the misacylated tRNA L-seryl-tRNA(Sec), which will be further converted into selenocysteinyl-tRNA(Sec). In Shewanella piezotolerans (strain WP3 / JCM 13877), this protein is Serine--tRNA ligase.